Consider the following 225-residue polypeptide: Probable 3-keto-L-gulonate-6-phosphate decarboxylase (225 aa).

Aspartate 11 provides a ligand contact to substrate. Glutamate 33 and aspartate 62 together coordinate Mg(2+). Arginine 202 serves as a coordination point for substrate.

This sequence belongs to the HPS/KGPDC family. KGPDC subfamily. As to quaternary structure, homodimer. Requires Mg(2+) as cofactor.

It catalyses the reaction 3-dehydro-L-gulonate 6-phosphate + H(+) = L-xylulose 5-phosphate + CO2. Catalyzes the decarboxylation of 3-keto-L-gulonate-6-P into L-xylulose-5-P. The chain is Probable 3-keto-L-gulonate-6-phosphate decarboxylase (sgbH) from Haemophilus influenzae (strain ATCC 51907 / DSM 11121 / KW20 / Rd).